The sequence spans 430 residues: Probable ribosomal RNA small subunit methyltransferase B (430 aa).

S-adenosyl-L-methionine contacts are provided by residues 246 to 252, D270, D299, and D318; that span reads CAAPGSK. Catalysis depends on C371, which acts as the Nucleophile.

It belongs to the class I-like SAM-binding methyltransferase superfamily. RsmB/NOP family.

Its subcellular location is the cytoplasm. It carries out the reaction cytidine(967) in 16S rRNA + S-adenosyl-L-methionine = 5-methylcytidine(967) in 16S rRNA + S-adenosyl-L-homocysteine + H(+). Functionally, specifically methylates the cytosine at position 967 (m5C967) of 16S rRNA. This Coxiella burnetii (strain RSA 493 / Nine Mile phase I) protein is Probable ribosomal RNA small subunit methyltransferase B.